A 160-amino-acid chain; its full sequence is Phosphopantetheine adenylyltransferase (160 aa).

Residue serine 10 coordinates substrate. ATP-binding positions include 10–11 and histidine 18; that span reads SF. 3 residues coordinate substrate: lysine 42, leucine 74, and arginine 88. Residues 89-91, glutamate 99, and 124-130 each bind ATP; these read GLR and YSFLSSS.

This sequence belongs to the bacterial CoaD family. As to quaternary structure, homohexamer. It depends on Mg(2+) as a cofactor.

The protein localises to the cytoplasm. The enzyme catalyses (R)-4'-phosphopantetheine + ATP + H(+) = 3'-dephospho-CoA + diphosphate. The protein operates within cofactor biosynthesis; coenzyme A biosynthesis; CoA from (R)-pantothenate: step 4/5. In terms of biological role, reversibly transfers an adenylyl group from ATP to 4'-phosphopantetheine, yielding dephospho-CoA (dPCoA) and pyrophosphate. The protein is Phosphopantetheine adenylyltransferase of Bacillus pumilus (strain SAFR-032).